A 756-amino-acid chain; its full sequence is Hyperosmolality-gated Ca2+ permeable channel 1.5 (756 aa).

A run of 10 helical transmembrane segments spans residues 7–27 (IGVA…AFAI), 101–121 (IYLL…TVMV), 154–174 (SRFW…CFVL), 373–393 (LVIA…IAFV), 425–445 (FLPG…LMLM), 465–485 (YYMF…TALQ), 510–530 (ATFF…GEIL), 574–594 (FILG…ILVF), 628–648 (VVIA…TKKA), and 651–671 (STPL…FCQG). The disordered stretch occupies residues 731-756 (PDKTPDLVATKRGSRRFNSGSAETFT). The span at 746-756 (RFNSGSAETFT) shows a compositional bias: polar residues.

Belongs to the CSC1 (TC 1.A.17) family.

Its subcellular location is the membrane. Acts as an osmosensitive calcium-permeable cation channel. The protein is Hyperosmolality-gated Ca2+ permeable channel 1.5 of Arabidopsis thaliana (Mouse-ear cress).